A 138-amino-acid chain; its full sequence is Superoxide dismutase [Mn] (138 aa).

Mn(2+) is bound by residues histidine 1, histidine 49, aspartate 133, and histidine 137.

This sequence belongs to the iron/manganese superoxide dismutase family. Mn(2+) is required as a cofactor.

The enzyme catalyses 2 superoxide + 2 H(+) = H2O2 + O2. Its function is as follows. Destroys superoxide anion radicals which are normally produced within the cells and which are toxic to biological systems. The chain is Superoxide dismutase [Mn] (sodA) from Mycobacterium malmoense.